The chain runs to 202 residues: Helix-loop-helix protein 10 (202 aa).

Disordered regions lie at residues 1 to 26 and 83 to 112; these read MESS…NSEL and QNKS…GKID. Positions 17–26 are enriched in polar residues; sequence STGNHGNSEL. The basic motif stretch occupies residues 121 to 134; it reads TRRYEANARERNRV. Residues 121 to 172 form the bHLH domain; it reads TRRYEANARERNRVQQLSKMFDQLRVCLPIEDDAKISKLATLKVASSYIGYL. The interval 135–172 is helix-loop-helix motif; the sequence is QQLSKMFDQLRVCLPIEDDAKISKLATLKVASSYIGYL.

As to quaternary structure, heterodimer with hlh-2. Expressed in intestine, neurons in head, body and tail, and in body hypodermis, and vulva. Expressed in neurons in the male-specific genital sensilla (simple sense organs) known as rays.

The protein resides in the nucleus. It localises to the cytoplasm. Functionally, probable transcription factor which binds the E box motif 5'-CA[TC][AG]TG-3'. This Caenorhabditis elegans protein is Helix-loop-helix protein 10.